The following is a 443-amino-acid chain: Transcriptional adapter 2-alpha (443 aa).

Pro6 is modified (phosphoserine; in variant Ser-6). Residues 12–69 (SDKPPCRGCSSYLMEPYIKCAECGPPPFFLCLQCFTRGFEYKKHQSDHTYEIMTSDFP) form a ZZ-type zinc finger. Residues Cys17, Cys20, Cys31, Cys34, Cys42, Cys45, His55, and His59 each contribute to the Zn(2+) site. The 53-residue stretch at 70–122 (VLDPSWTAQEEMALLEAVMDCGFGNWQDVANQMCTKTKEECEKHYMKHFINNP) folds into the SANT domain. Glycyl lysine isopeptide (Lys-Gly) (interchain with G-Cter in SUMO2) cross-links involve residues Lys132 and Lys138. Residues 348-372 (SPSIPMASNSGRRSAPPLNLTGLPG) are disordered. The region spanning 356-443 (NSGRRSAPPL…LIREGYITKG (88 aa)) is the SWIRM domain. Residues 426 to 435 (KTRKIYDFLI) mediate DNA binding.

Interacts with GCN5 and NR3C1. Associated with the P/CAF protein in the PCAF complex. Component of the PCAF complex, at least composed of TADA2L/ADA2, TADA3L/ADA3, TAF5L/PAF65-beta, TAF6L/PAF65-alpha, TAF10/TAFII30, TAF12/TAFII20, TAF9/TAFII31 and TRRAP. Component of the ADA2A-containing complex (ATAC), composed of KAT14, KAT2A, TADA2L, TADA3L, ZZ3, MBIP, WDR5, YEATS2, CCDC101 and DR1. Interacts with CCDC134. In terms of tissue distribution, expressed in all tissues, but most abundantly in testis.

It localises to the nucleus. Its subcellular location is the chromosome. Its function is as follows. Component of the ATAC complex, a complex with histone acetyltransferase activity on histones H3 and H4. Required for the function of some acidic activation domains, which activate transcription from a distant site. Binds double-stranded DNA. Binds dinucleosomes, probably at the linker region between neighboring nucleosomes. Plays a role in chromatin remodeling. May promote TP53/p53 'Lys-321' acetylation, leading to reduced TP53 stability and transcriptional activity. May also promote XRCC6 acetylation thus facilitating cell apoptosis in response to DNA damage. The sequence is that of Transcriptional adapter 2-alpha (TADA2A) from Homo sapiens (Human).